Consider the following 744-residue polypeptide: NADH-ubiquinone oxidoreductase 78 kDa subunit, mitochondrial (744 aa).

A compositionally biased stretch (polar residues) spans methionine 1–alanine 10. Residues methionine 1–phenylalanine 26 are disordered. A mitochondrion-targeting transit peptide spans methionine 1–proline 33. In terms of domain architecture, 2Fe-2S ferredoxin-type spans alanine 34–leucine 112. The [2Fe-2S] cluster site is built by cysteine 68, cysteine 79, cysteine 82, and cysteine 96. Residues leucine 112–glycine 151 form the 4Fe-4S His(Cys)3-ligated-type domain. Positions 128, 132, 135, 141, 182, 185, 188, and 232 each coordinate [4Fe-4S] cluster. Residues leucine 251–arginine 307 enclose the 4Fe-4S Mo/W bis-MGD-type domain.

This sequence belongs to the complex I 75 kDa subunit family. As to quaternary structure, complex I is composed of about 40 different subunits. [2Fe-2S] cluster serves as cofactor. [4Fe-4S] cluster is required as a cofactor.

Its subcellular location is the mitochondrion inner membrane. It catalyses the reaction a ubiquinone + NADH + 5 H(+)(in) = a ubiquinol + NAD(+) + 4 H(+)(out). Functionally, core subunit of the mitochondrial membrane respiratory chain NADH dehydrogenase (Complex I) that is believed to belong to the minimal assembly required for catalysis. Complex I functions in the transfer of electrons from NADH to the respiratory chain. The immediate electron acceptor for the enzyme is believed to be ubiquinone. This is the largest subunit of complex I and it is a component of the iron-sulfur (IP) fragment of the enzyme. It may form part of the active site crevice where NADH is oxidized. The protein is NADH-ubiquinone oxidoreductase 78 kDa subunit, mitochondrial (nuo78) of Neurospora crassa (strain ATCC 24698 / 74-OR23-1A / CBS 708.71 / DSM 1257 / FGSC 987).